The primary structure comprises 264 residues: Ubiquinone biosynthesis protein COQ4 homolog, mitochondrial (264 aa).

A mitochondrion-targeting transit peptide spans 1–26 (MMQRCWQISLPLARRRLIPSLTSKRT). The Zn(2+) site is built by histidine 169, aspartate 170, histidine 173, and glutamate 185.

It belongs to the COQ4 family. Component of a multi-subunit COQ enzyme complex. It depends on Zn(2+) as a cofactor.

It localises to the mitochondrion inner membrane. It catalyses the reaction a 4-hydroxy-3-methoxy-5-(all-trans-polyprenyl)benzoate + H(+) = a 2-methoxy-6-(all-trans-polyprenyl)phenol + CO2. It participates in cofactor biosynthesis; ubiquinone biosynthesis. Lyase that catalyzes the C1-decarboxylation of 4-hydroxy-3-methoxy-5-(all-trans-polyprenyl)benzoic acid into 2-methoxy-6-(all-trans-polyprenyl)phenol during ubiquinone biosynthesis. This Drosophila grimshawi (Hawaiian fruit fly) protein is Ubiquinone biosynthesis protein COQ4 homolog, mitochondrial.